The chain runs to 604 residues: Aspartate--tRNA(Asp/Asn) ligase (604 aa).

L-aspartate is bound at residue glutamate 175. The aspartate stretch occupies residues 199–202 (QQFK). Positions 221 and 456 each coordinate L-aspartate. Residue 221 to 223 (RDE) participates in ATP binding. ATP is bound at residue glutamate 496. An L-aspartate-binding site is contributed by arginine 503. 548–551 (GVDR) lines the ATP pocket.

This sequence belongs to the class-II aminoacyl-tRNA synthetase family. Type 1 subfamily. In terms of assembly, homodimer.

The protein resides in the cytoplasm. The enzyme catalyses tRNA(Asx) + L-aspartate + ATP = L-aspartyl-tRNA(Asx) + AMP + diphosphate. Its function is as follows. Aspartyl-tRNA synthetase with relaxed tRNA specificity since it is able to aspartylate not only its cognate tRNA(Asp) but also tRNA(Asn). Reaction proceeds in two steps: L-aspartate is first activated by ATP to form Asp-AMP and then transferred to the acceptor end of tRNA(Asp/Asn). In Methylorubrum populi (strain ATCC BAA-705 / NCIMB 13946 / BJ001) (Methylobacterium populi), this protein is Aspartate--tRNA(Asp/Asn) ligase.